A 372-amino-acid polypeptide reads, in one-letter code: N-methyl-L-tryptophan oxidase (372 aa).

Position 4-34 (4-34) interacts with FAD; the sequence is DLIIIGSGSVGAAAGYYATRAGLNVLMTDAH. At C308 the chain carries S-8alpha-FAD cysteine.

The protein belongs to the MSOX/MTOX family. MTOX subfamily. As to quaternary structure, monomer. FAD is required as a cofactor.

The enzyme catalyses N(alpha)-methyl-L-tryptophan + O2 + H2O = L-tryptophan + formaldehyde + H2O2. Catalyzes the oxidative demethylation of N-methyl-L-tryptophan. This Escherichia coli O81 (strain ED1a) protein is N-methyl-L-tryptophan oxidase.